Reading from the N-terminus, the 324-residue chain is Adipolin (324 aa).

The N-terminal stretch at 1-24 is a signal peptide; the sequence is MRCWVWLLVAIVLCQQLSVVRVLA. Disordered regions lie at residues 28 to 66 and 83 to 121; these read ERKK…DPGL and GANS…MPGA. The span at 40–49 shows a compositional bias: polar residues; it reads EPFNVSLSNS. A glycan (N-linked (GlcNAc...) asparagine) is linked at N43. The segment covering 50 to 60 has biased composition (basic and acidic residues); sequence EELHETDKLSE. Residues 86-98 are compositionally biased toward basic residues; sequence SKKKCKGKDKKLR. Over residues 103–118 the composition is skewed to pro residues; the sequence is PPGPPGPQGPPGPPGM. The 156-residue stretch at 169 to 324 folds into the C1q domain; sequence YRRVDEGFHC…SDFMGILMGL (156 aa).

This sequence belongs to the adipolin/erythroferrone family. In terms of assembly, homomultimer; disulfide-linked.

Its subcellular location is the secreted. Functionally, insulin-sensitizing adipocyte-secreted protein (adipokine) that regulates glucose metabolism in liver and adipose tissue. In Xenopus tropicalis (Western clawed frog), this protein is Adipolin (c1qtnf12).